The following is a 347-amino-acid chain: N-acetyl-gamma-glutamyl-phosphate reductase (347 aa).

The active site involves Cys151.

This sequence belongs to the NAGSA dehydrogenase family. Type 1 subfamily.

It is found in the cytoplasm. It catalyses the reaction N-acetyl-L-glutamate 5-semialdehyde + phosphate + NADP(+) = N-acetyl-L-glutamyl 5-phosphate + NADPH + H(+). Its pathway is amino-acid biosynthesis; L-arginine biosynthesis; N(2)-acetyl-L-ornithine from L-glutamate: step 3/4. In terms of biological role, catalyzes the NADPH-dependent reduction of N-acetyl-5-glutamyl phosphate to yield N-acetyl-L-glutamate 5-semialdehyde. The protein is N-acetyl-gamma-glutamyl-phosphate reductase of Corynebacterium glutamicum (strain R).